A 309-amino-acid chain; its full sequence is Probable (S)-ureidoglycine aminohydrolase (309 aa).

The signal sequence occupies residues 1 to 22 (MMLPRLLLLVVASALPLASVAA). Positions 245, 247, 251, and 285 each coordinate Mn(2+). Position 245 (glutamate 245) interacts with substrate. Residues glutamine 285, tyrosine 297, and lysine 301 each contribute to the substrate site.

This sequence belongs to the UGHY family. In terms of assembly, homooctamer. The cofactor is Mn(2+).

It is found in the endoplasmic reticulum. It catalyses the reaction (S)-2-ureidoglycine + H2O = (S)-ureidoglycolate + NH4(+). In terms of biological role, involved in the catabolism of purine nucleotides. The sequential activity of AAH, UGLYAH and UAH allows a complete purine breakdown without the intermediate generation of urea. The sequence is that of Probable (S)-ureidoglycine aminohydrolase (UGLYAH) from Oryza sativa subsp. japonica (Rice).